Reading from the N-terminus, the 350-residue chain is 4-hydroxythreonine-4-phosphate dehydrogenase (350 aa).

2 residues coordinate substrate: histidine 138 and threonine 139. Residues histidine 173, histidine 218, and histidine 273 each coordinate a divalent metal cation. Lysine 281, asparagine 290, and arginine 299 together coordinate substrate.

The protein belongs to the PdxA family. As to quaternary structure, homodimer. Zn(2+) is required as a cofactor. It depends on Mg(2+) as a cofactor. The cofactor is Co(2+).

It is found in the cytoplasm. The catalysed reaction is 4-(phosphooxy)-L-threonine + NAD(+) = 3-amino-2-oxopropyl phosphate + CO2 + NADH. It functions in the pathway cofactor biosynthesis; pyridoxine 5'-phosphate biosynthesis; pyridoxine 5'-phosphate from D-erythrose 4-phosphate: step 4/5. Functionally, catalyzes the NAD(P)-dependent oxidation of 4-(phosphooxy)-L-threonine (HTP) into 2-amino-3-oxo-4-(phosphooxy)butyric acid which spontaneously decarboxylates to form 3-amino-2-oxopropyl phosphate (AHAP). The protein is 4-hydroxythreonine-4-phosphate dehydrogenase of Xanthobacter autotrophicus (strain ATCC BAA-1158 / Py2).